A 256-amino-acid chain; its full sequence is Ubiquinone/menaquinone biosynthesis C-methyltransferase UbiE (256 aa).

Residues T79, D100, and 128–129 (DA) each bind S-adenosyl-L-methionine.

This sequence belongs to the class I-like SAM-binding methyltransferase superfamily. MenG/UbiE family.

The catalysed reaction is a 2-demethylmenaquinol + S-adenosyl-L-methionine = a menaquinol + S-adenosyl-L-homocysteine + H(+). It catalyses the reaction a 2-methoxy-6-(all-trans-polyprenyl)benzene-1,4-diol + S-adenosyl-L-methionine = a 5-methoxy-2-methyl-3-(all-trans-polyprenyl)benzene-1,4-diol + S-adenosyl-L-homocysteine + H(+). It functions in the pathway quinol/quinone metabolism; menaquinone biosynthesis; menaquinol from 1,4-dihydroxy-2-naphthoate: step 2/2. Its pathway is cofactor biosynthesis; ubiquinone biosynthesis. Functionally, methyltransferase required for the conversion of demethylmenaquinol (DMKH2) to menaquinol (MKH2) and the conversion of 2-polyprenyl-6-methoxy-1,4-benzoquinol (DDMQH2) to 2-polyprenyl-3-methyl-6-methoxy-1,4-benzoquinol (DMQH2). The protein is Ubiquinone/menaquinone biosynthesis C-methyltransferase UbiE of Ectopseudomonas mendocina (strain ymp) (Pseudomonas mendocina).